The sequence spans 795 residues: Protocadherin beta-4 (795 aa).

The N-terminal stretch at 1-27 (MKKLGRIHPNRQVLAFILMVFLSQVRL) is a signal peptide. The Extracellular portion of the chain corresponds to 28-689 (EPIRYSVLEE…AQADSLTVYL (662 aa)). Cadherin domains lie at 34 to 132 (VLEE…SPIF), 137 to 241 (VLLK…APEF), 246 to 346 (YGVQ…PPEL), 351 to 450 (LTSS…APAF), and 455 to 560 (YTLF…SPFV). Asn183 carries an N-linked (GlcNAc...) asparagine glycan. Residues Asn417 and Asn435 are each glycosylated (N-linked (GlcNAc...) asparagine). Asn566 carries an N-linked (GlcNAc...) asparagine glycan. Positions 567 to 670 (GSAPCTELVP…LVDGFSQPYL (104 aa)) constitute a Cadherin 6 domain. A helical membrane pass occupies residues 690–710 (VVALASVSSLFLFSVLLFVAV). Over 711 to 795 (RLCRRSRAAS…PKFRNSLVFS (85 aa)) the chain is Cytoplasmic.

The protein resides in the cell membrane. Its function is as follows. Potential calcium-dependent cell-adhesion protein. May be involved in the establishment and maintenance of specific neuronal connections in the brain. The polypeptide is Protocadherin beta-4 (PCDHB4) (Homo sapiens (Human)).